Consider the following 236-residue polypeptide: Lipoarabinomannan carrier protein LprG (236 aa).

The first 25 residues, 1–25 (MQTRPRFAVQSLFAILATAAALVAG), serve as a signal peptide directing secretion. Residue cysteine 26 is the site of N-palmitoyl cysteine attachment. The S-diacylglycerol cysteine moiety is linked to residue cysteine 26.

The protein belongs to the LppX/LprAFG lipoprotein family. As to quaternary structure, interacts with itself, Ag85A (MSMEG_6398), LppI (MSMEG_3851) and LppK (MSMEG_3904) in vivo.

Its subcellular location is the cell inner membrane. The protein resides in the secreted. It localises to the cell wall. Helps membrane protein MSMEG_3069/MSMEI_2992 (P55) transport triacylglycerides (TAG) across the inner cell membrane into the periplasm and probably ultimately to the outer membrane. Binds TAG in its hydrophobic cavity and transfers it between lipid bilayers. TAG probably regulates lipid metabolism and growth regulation and plays a structural role in the outer membrane. Also binds mannosides, lipoarabinomannan and lipomannan and various glycolipids in the same cavity. Required for MSMEG_3069/MSMEI_2992 export activity. Export of ethidium bromide by MSMEG_3069/MSMEI_2992 can be complemented by the equivalent operon from M.tuberculosis (lprG-Rv1410c). Involved in mycolylation. The polypeptide is Lipoarabinomannan carrier protein LprG (Mycolicibacterium smegmatis (strain ATCC 700084 / mc(2)155) (Mycobacterium smegmatis)).